Reading from the N-terminus, the 39-residue chain is uncharacterized protein (39 aa).

It belongs to the orthopoxvirus A30.5 protein family.

This is an uncharacterized protein from Bos taurus (Bovine).